The chain runs to 361 residues: UDP-N-acetylglucosamine--N-acetylmuramyl-(pentapeptide) pyrophosphoryl-undecaprenol N-acetylglucosamine transferase (361 aa).

UDP-N-acetyl-alpha-D-glucosamine contacts are provided by residues 21-23 (TGG), N131, R172, S195, I250, and Q295.

This sequence belongs to the glycosyltransferase 28 family. MurG subfamily.

Its subcellular location is the cell inner membrane. The enzyme catalyses di-trans,octa-cis-undecaprenyl diphospho-N-acetyl-alpha-D-muramoyl-L-alanyl-D-glutamyl-meso-2,6-diaminopimeloyl-D-alanyl-D-alanine + UDP-N-acetyl-alpha-D-glucosamine = di-trans,octa-cis-undecaprenyl diphospho-[N-acetyl-alpha-D-glucosaminyl-(1-&gt;4)]-N-acetyl-alpha-D-muramoyl-L-alanyl-D-glutamyl-meso-2,6-diaminopimeloyl-D-alanyl-D-alanine + UDP + H(+). Its pathway is cell wall biogenesis; peptidoglycan biosynthesis. In terms of biological role, cell wall formation. Catalyzes the transfer of a GlcNAc subunit on undecaprenyl-pyrophosphoryl-MurNAc-pentapeptide (lipid intermediate I) to form undecaprenyl-pyrophosphoryl-MurNAc-(pentapeptide)GlcNAc (lipid intermediate II). The chain is UDP-N-acetylglucosamine--N-acetylmuramyl-(pentapeptide) pyrophosphoryl-undecaprenol N-acetylglucosamine transferase from Solibacter usitatus (strain Ellin6076).